Consider the following 285-residue polypeptide: MARCO-like protein (285 aa).

Residues 1–20 (MRAFIFFLFMLLAMFSASST) form the signal peptide. An N-linked (GlcNAc...) asparagine glycan is attached at N24. Disordered stretches follow at residues 47-77 (NHLG…GQPG) and 91-285 (GRAG…QGNL). 2 stretches are compositionally biased toward polar residues: residues 57–67 (KQGGSYTQGNP) and 105–114 (SGKSNQKGNP). A compositionally biased stretch (low complexity) spans 115 to 128 (ESSNKQENSGSSSQ). Polar residues predominate over residues 134-145 (ISTQQGNPGSSD). The segment covering 160–173 (GSSSQQGKPGSSSQ) has biased composition (low complexity). Positions 174-185 (HGNLGSSTQKGN) are enriched in polar residues. A compositionally biased stretch (low complexity) spans 186-220 (LGSSSLQGHLGLSSHQGKPESSGQQGKPGSSSQQG). Residues 221 to 285 (NLGTSGQQEK…PGSSSRQGNL (65 aa)) show a composition bias toward polar residues.

This Homo sapiens (Human) protein is MARCO-like protein.